The chain runs to 103 residues: Muscarinic toxin BM14 (103 aa).

Residues 1–21 form the signal peptide; it reads MKTLLLTLVVVTIICLDLGYT. Disulfide bonds link Cys-24–Cys-45, Cys-27–Cys-37, Cys-38–Cys-72, Cys-76–Cys-90, and Cys-91–Cys-96.

Belongs to the three-finger toxin family. Ancestral subfamily. Orphan group XVII sub-subfamily. Expressed by the venom gland.

Its subcellular location is the secreted. In terms of biological role, this toxin inhibits the binding of [3H]quinuclidinyl benzilate to the M2 muscarinic acetylcholine (mAchR) receptor subtype (CHRM2). This Bungarus multicinctus (Many-banded krait) protein is Muscarinic toxin BM14.